The chain runs to 528 residues: MSTVNVQIGLHELLNGSNAQIQLSVPQLVEKVLMRNEGKLTSTGAVSASTGKYTGRSPKDKFIVKEASVADKIAWGAVNQPISEEHFNKLYTKVLEYLKEKEELFVFKGFAGADRNYRLPIQVINEYAWHNLFVHQLFIRPTEEELTTHESEFTIVSAPNFKADPAVDGTNSEAFIMVSFEKRIVLIGGTEYAGEMKKSIFSIMNFLLPEQDILSMHCSANVGEEGDVALFFGLSGTGKTTLSADPNRKLIGDDEHGWSDNGVFNIEGGCYAKCVNLSHEKEPQIFDAITFGSVLENVIINDQTRIADYNDTTLTENTRAAYPMHAIDNIVLPSVAGHPNTIIFLTADASGVLPPISKLSKEQAMYHFLSGYTSKLAGTERGVTSPQATFSTCFGSPFLPLDASRYAEMLGEKIEKHDAKVFLVNTGWTGGEYGVGKRMNLGYTRAMIQAALSGELAKTETAKHDIFGLEVPLHVPGVPDEVLMPEQTWADKAAYKAKAIELANEFKANFKKFDSVSEDIINLGGPIA.

Residues R56, Y192, and K198 each coordinate substrate. ATP is bound by residues K198, H217, and 233–241 (GLSGTGKTT). K198 and H217 together coordinate Mn(2+). D254 is a binding site for Mn(2+). ATP contacts are provided by E282, R319, and T444. R319 provides a ligand contact to substrate.

Belongs to the phosphoenolpyruvate carboxykinase (ATP) family. The cofactor is Mn(2+).

The protein resides in the cytoplasm. The enzyme catalyses oxaloacetate + ATP = phosphoenolpyruvate + ADP + CO2. Its pathway is carbohydrate biosynthesis; gluconeogenesis. Functionally, involved in the gluconeogenesis. Catalyzes the conversion of oxaloacetate (OAA) to phosphoenolpyruvate (PEP) through direct phosphoryl transfer between the nucleoside triphosphate and OAA. The chain is Phosphoenolpyruvate carboxykinase (ATP) from Bacillus cereus (strain AH187).